The sequence spans 453 residues: Allantoinase (453 aa).

Positions 59, 61, 146, 186, 242, and 315 each coordinate Zn(2+). Lys-146 carries the post-translational modification N6-carboxylysine.

It belongs to the metallo-dependent hydrolases superfamily. Allantoinase family. As to quaternary structure, homotetramer. Zn(2+) is required as a cofactor. In terms of processing, carboxylation allows a single lysine to coordinate two zinc ions.

It catalyses the reaction (S)-allantoin + H2O = allantoate + H(+). The protein operates within nitrogen metabolism; (S)-allantoin degradation; allantoate from (S)-allantoin: step 1/1. Its function is as follows. Catalyzes the conversion of allantoin (5-ureidohydantoin) to allantoic acid by hydrolytic cleavage of the five-member hydantoin ring. The chain is Allantoinase from Escherichia coli (strain SMS-3-5 / SECEC).